The following is a 284-amino-acid chain: 4-diphosphocytidyl-2-C-methyl-D-erythritol kinase (284 aa).

Lys9 is an active-site residue. 90-100 (PLVSGLGGDSS) contributes to the ATP binding site. The active site involves Asp132.

This sequence belongs to the GHMP kinase family. IspE subfamily.

It carries out the reaction 4-CDP-2-C-methyl-D-erythritol + ATP = 4-CDP-2-C-methyl-D-erythritol 2-phosphate + ADP + H(+). It participates in isoprenoid biosynthesis; isopentenyl diphosphate biosynthesis via DXP pathway; isopentenyl diphosphate from 1-deoxy-D-xylulose 5-phosphate: step 3/6. In terms of biological role, catalyzes the phosphorylation of the position 2 hydroxy group of 4-diphosphocytidyl-2C-methyl-D-erythritol. This chain is 4-diphosphocytidyl-2-C-methyl-D-erythritol kinase, found in Dehalococcoides mccartyi (strain ATCC BAA-2100 / JCM 16839 / KCTC 5957 / BAV1).